The following is a 232-amino-acid chain: tRNA (guanine-N(7)-)-methyltransferase (232 aa).

Positions 63, 88, 115, and 137 each coordinate S-adenosyl-L-methionine. The active site involves aspartate 137. Residues lysine 141, aspartate 173, and 211 to 214 each bind substrate; that span reads TRYE.

The protein belongs to the class I-like SAM-binding methyltransferase superfamily. TrmB family.

It catalyses the reaction guanosine(46) in tRNA + S-adenosyl-L-methionine = N(7)-methylguanosine(46) in tRNA + S-adenosyl-L-homocysteine. Its pathway is tRNA modification; N(7)-methylguanine-tRNA biosynthesis. Functionally, catalyzes the formation of N(7)-methylguanine at position 46 (m7G46) in tRNA. The chain is tRNA (guanine-N(7)-)-methyltransferase from Agrobacterium fabrum (strain C58 / ATCC 33970) (Agrobacterium tumefaciens (strain C58)).